Consider the following 883-residue polypeptide: Valine--tRNA ligase (883 aa).

Residues proline 46 to histidine 56 carry the 'HIGH' region motif. The short motif at lysine 520–serine 524 is the 'KMSKS' region element. An ATP-binding site is contributed by lysine 523. A coiled-coil region spans residues leucine 809–arginine 844.

Belongs to the class-I aminoacyl-tRNA synthetase family. ValS type 1 subfamily. In terms of assembly, monomer.

Its subcellular location is the cytoplasm. The catalysed reaction is tRNA(Val) + L-valine + ATP = L-valyl-tRNA(Val) + AMP + diphosphate. Catalyzes the attachment of valine to tRNA(Val). As ValRS can inadvertently accommodate and process structurally similar amino acids such as threonine, to avoid such errors, it has a 'posttransfer' editing activity that hydrolyzes mischarged Thr-tRNA(Val) in a tRNA-dependent manner. The protein is Valine--tRNA ligase of Streptococcus agalactiae serotype V (strain ATCC BAA-611 / 2603 V/R).